The following is a 215-amino-acid chain: Large ribosomal subunit protein uL1 (215 aa).

The protein belongs to the universal ribosomal protein uL1 family. As to quaternary structure, part of the 50S ribosomal subunit.

In terms of biological role, binds directly to 23S rRNA. Probably involved in E site tRNA release. Protein L1 is also a translational repressor protein, it controls the translation of its operon by binding to its mRNA. The protein is Large ribosomal subunit protein uL1 of Methanospirillum hungatei JF-1 (strain ATCC 27890 / DSM 864 / NBRC 100397 / JF-1).